Reading from the N-terminus, the 303-residue chain is UDP-3-O-acyl-N-acetylglucosamine deacetylase (303 aa).

3 residues coordinate Zn(2+): histidine 78, histidine 237, and aspartate 241. Histidine 264 (proton donor) is an active-site residue.

This sequence belongs to the LpxC family. It depends on Zn(2+) as a cofactor.

The catalysed reaction is a UDP-3-O-[(3R)-3-hydroxyacyl]-N-acetyl-alpha-D-glucosamine + H2O = a UDP-3-O-[(3R)-3-hydroxyacyl]-alpha-D-glucosamine + acetate. It participates in glycolipid biosynthesis; lipid IV(A) biosynthesis; lipid IV(A) from (3R)-3-hydroxytetradecanoyl-[acyl-carrier-protein] and UDP-N-acetyl-alpha-D-glucosamine: step 2/6. In terms of biological role, catalyzes the hydrolysis of UDP-3-O-myristoyl-N-acetylglucosamine to form UDP-3-O-myristoylglucosamine and acetate, the committed step in lipid A biosynthesis. The polypeptide is UDP-3-O-acyl-N-acetylglucosamine deacetylase (Pseudomonas aeruginosa (strain LESB58)).